A 286-amino-acid polypeptide reads, in one-letter code: Ferric acinetobactin reductase (286 aa).

The 107-residue stretch at 25 to 131 folds into the FAD-binding FR-type domain; the sequence is MEQLEMTIVS…IGPRPHFIPN (107 aa). 12 residues coordinate FAD: Arg-79, Val-80, Thr-82, Asp-96, Val-98, His-100, Asp-102, Ser-104, Ala-106, Arg-250, Gly-252, and Ser-255.

It belongs to the SIP oxidoreductase family. As to quaternary structure, monomer in solution. FAD is required as a cofactor.

It catalyses the reaction 2 a Fe(II)-siderophore + NAD(+) + H(+) = 2 a Fe(III)-siderophore + NADH. The catalysed reaction is 2 a Fe(II)-siderophore + NADP(+) + H(+) = 2 a Fe(III)-siderophore + NADPH. In terms of biological role, ferric-siderophore reductase involved in iron removal from the siderophores after their transport into the cell. Interacts with the siderophores acinetobactin (Acb) and preacinetobactin (pre-Acb) and catalyzes the reduction of the ferric iron bound to the siderophores to ferrous iron, resulting in destabilization of the siderophore chelation complex and entrance of ferrous iron into the intracellular pool of bioavailable metals. Can use NADH and NADPH as electron donors in vitro, but the reduction rate is very slow, suggesting that NADH and NADPH are not the physiological partners of BauF. The chain is Ferric acinetobactin reductase from Acinetobacter baumannii.